A 373-amino-acid chain; its full sequence is Peroxisomal biogenesis factor 3 (373 aa).

Topologically, residues 1–15 are cytoplasmic; the sequence is MLRSMWNFLKRHKKK. The interval 1–45 is targeting to peroxisomes; sequence MLRSMWNFLKRHKKKCIFLGTVLGGVYILGKYGQKKIREIQEREA. The helical transmembrane segment at 16 to 36 threads the bilayer; the sequence is CIFLGTVLGGVYILGKYGQKK. The Peroxisomal portion of the chain corresponds to 37–116; that stretch reads IREIQEREAA…LKIISFTRSI (80 aa). A helical membrane pass occupies residues 117 to 140; the sequence is VAVYSTCMLVVLLRVQLNIIGGYI. The tract at residues 120 to 136 is interaction with PEX19; it reads YSTCMLVVLLRVQLNII. Residues 141–373 are Cytoplasmic-facing; sequence YLDNATVGKN…AFSTPQQLEK (233 aa).

The protein belongs to the peroxin-3 family. As to quaternary structure, interacts with PEX19.

Its subcellular location is the peroxisome membrane. Functionally, involved in peroxisome biosynthesis and integrity. Assembles membrane vesicles before the matrix proteins are translocated. As a docking factor for PEX19, is necessary for the import of peroxisomal membrane proteins in the peroxisomes. The chain is Peroxisomal biogenesis factor 3 (PEX3) from Cricetulus longicaudatus (Long-tailed dwarf hamster).